We begin with the raw amino-acid sequence, 552 residues long: Membrane protein insertase YidC (552 aa).

Helical transmembrane passes span 7–24 (VLWV…DNWQ), 364–384 (WGWA…PLSA), 434–454 (LPVV…LASV), 473–493 (PFFI…SLNP), and 508–528 (PIAF…YYVV).

This sequence belongs to the OXA1/ALB3/YidC family. Type 1 subfamily. As to quaternary structure, interacts with the Sec translocase complex via SecD. Specifically interacts with transmembrane segments of nascent integral membrane proteins during membrane integration.

The protein localises to the cell inner membrane. In terms of biological role, required for the insertion and/or proper folding and/or complex formation of integral membrane proteins into the membrane. Involved in integration of membrane proteins that insert both dependently and independently of the Sec translocase complex, as well as at least some lipoproteins. Aids folding of multispanning membrane proteins. The protein is Membrane protein insertase YidC of Burkholderia cenocepacia (strain HI2424).